The chain runs to 421 residues: ATP-dependent RNA helicase RhlB (421 aa).

Positions 9–37 match the Q motif motif; that stretch reads QKFSDFALHPKVVEALEKKGFHNCTPIQA. The region spanning 40–219 is the Helicase ATP-binding domain; sequence LPLTLAGRDV…FEQMNNAEYI (180 aa). 53–60 lines the ATP pocket; that stretch reads AQTGTGKT. A DEAD box motif is present at residues 165–168; that stretch reads DEAD. Positions 245–390 constitute a Helicase C-terminal domain; that stretch reads RLLQTLIEEE…VSKYNPDALM (146 aa). A disordered region spans residues 392–421; the sequence is DLPKPLRLTRPRTGNGPRRTGAPRNRRRSG. Residues 402–414 show a composition bias toward low complexity; the sequence is PRTGNGPRRTGAP.

The protein belongs to the DEAD box helicase family. RhlB subfamily. Component of the RNA degradosome, which is a multiprotein complex involved in RNA processing and mRNA degradation.

The protein localises to the cytoplasm. It carries out the reaction ATP + H2O = ADP + phosphate + H(+). DEAD-box RNA helicase involved in RNA degradation. Has RNA-dependent ATPase activity and unwinds double-stranded RNA. The sequence is that of ATP-dependent RNA helicase RhlB from Escherichia coli O139:H28 (strain E24377A / ETEC).